The chain runs to 123 residues: Testis-expressed protein 12 (123 aa).

Residues 1–41 (MMANHLVKPDSRNCKRARELEPQVSDSPQVSSLGKSESSLS) form a disordered region. Residues 7-21 (VKPDSRNCKRARELE) are compositionally biased toward basic and acidic residues. Positions 31–41 (SSLGKSESSLS) are enriched in low complexity.

Interacts with SYCE2. In terms of tissue distribution, testis (at protein level). Detected in ovary. Expressed in both male and female germ cells.

The protein resides in the chromosome. Its function is as follows. Component of the transverse central element of synaptonemal complexes (SCS), formed between homologous chromosomes during meiotic prophase. Requires SYCP1 in order to be incorporated into the central element. The chain is Testis-expressed protein 12 (Tex12) from Mus musculus (Mouse).